A 382-amino-acid polypeptide reads, in one-letter code: uncharacterized protein (382 aa).

The next 12 membrane-spanning stretches (helical) occupy residues 14-34 (GLLL…LWLA), 45-65 (MVSS…GYLI), 79-99 (LVFA…SWMA), 102-122 (FVAG…LMCS), 131-151 (LLAA…LLVS), 157-177 (LMNV…PLLF), 204-224 (LGVN…GLMP), 236-256 (NIGF…WPIG), 265-285 (LLVL…MLTH), 289-309 (APAL…AMAW), 325-345 (ALLL…AMLM), and 349-369 (SDNL…LMLL).

The protein belongs to the major facilitator superfamily. YcaD (TC 2.A.1.26) family.

Its subcellular location is the cell inner membrane. This is an uncharacterized protein from Escherichia fergusonii (strain ATCC 35469 / DSM 13698 / CCUG 18766 / IAM 14443 / JCM 21226 / LMG 7866 / NBRC 102419 / NCTC 12128 / CDC 0568-73).